Here is a 238-residue protein sequence, read N- to C-terminus: Tritrans,polycis-undecaprenyl-diphosphate synthase (geranylgeranyl-diphosphate specific) (238 aa).

Residue aspartate 18 is part of the active site. Aspartate 18 serves as a coordination point for Mg(2+). Substrate contacts are provided by residues 19–22 (GNRR) and 64–66 (STE). Asparagine 67 serves as the catalytic Proton acceptor. Substrate contacts are provided by residues arginine 70, arginine 187, and 193–195 (RLS). Glutamate 206 is a Mg(2+) binding site.

The protein belongs to the UPP synthase family. Homodimer. It depends on Mg(2+) as a cofactor.

The catalysed reaction is geranylgeranyl diphosphate + 7 isopentenyl diphosphate = tri-trans,hepta-cis-undecaprenyl diphosphate + 7 diphosphate. In terms of biological role, catalyzes the sequential condensation of isopentenyl diphosphate (IPP) with geranylgeranyl diphosphate (GGPP) to yield (2Z,6Z,10Z,14Z,18Z,22Z,26Z,30E,34E,38E)-undecaprenyl diphosphate (tritrans,heptacis-UPP). It is probably the precursor of glycosyl carrier lipids. This is Tritrans,polycis-undecaprenyl-diphosphate synthase (geranylgeranyl-diphosphate specific) from Pyrobaculum aerophilum (strain ATCC 51768 / DSM 7523 / JCM 9630 / CIP 104966 / NBRC 100827 / IM2).